We begin with the raw amino-acid sequence, 638 residues long: Neuroendocrine convertase 2 (638 aa).

A signal peptide spans 1-25 (MRGGCISQGKAAAGLLFCVMVFASA). A propeptide spanning residues 26–109 (ERPVFTNHFL…QQEGFNRKKR (84 aa)) is cleaved from the precursor. The 325-residue stretch at 129 to 453 (QWYLINTGQA…YGVLDAGAMV (325 aa)) folds into the Peptidase S8 domain. Catalysis depends on charge relay system residues Asp-167 and His-208. 2 disulfide bridges follow: Cys-225-Cys-376 and Cys-317-Cys-347. An N-linked (GlcNAc...) asparagine glycan is attached at Asn-375. The Charge relay system role is filled by Ser-384. One can recognise a P/Homo B domain in the interval 461-597 (TVPERFHCVG…TLMLHGTQSA (137 aa)). The cysteines at positions 468 and 494 are disulfide-linked. N-linked (GlcNAc...) asparagine glycans are attached at residues Asn-514 and Asn-524.

It belongs to the peptidase S8 family. Furin subfamily.

It is found in the cytoplasmic vesicle. The protein resides in the secretory vesicle. The protein localises to the secreted. It carries out the reaction Release of protein hormones and neuropeptides from their precursors, generally by hydrolysis of -Lys-Arg-|- bonds.. Serine endopeptidase which is involved in the processing of hormone and other protein precursors at sites comprised of pairs of basic amino acid residues. Responsible for the release of glucagon from proglucagon in pancreatic A cells. The chain is Neuroendocrine convertase 2 (PCSK2) from Bos taurus (Bovine).